The sequence spans 81 residues: Sulfur carrier protein TusA (81 aa).

The active-site Cysteine persulfide intermediate is the C19.

It belongs to the sulfur carrier protein TusA family. Interacts with IscS.

It is found in the cytoplasm. Its pathway is tRNA modification. Its function is as follows. Sulfur carrier protein involved in sulfur trafficking in the cell. Part of a sulfur-relay system required for 2-thiolation during synthesis of 2-thiouridine of the modified wobble base 5-methylaminomethyl-2-thiouridine (mnm(5)s(2)U) in tRNA. Interacts with IscS and stimulates its cysteine desulfurase activity. Accepts an activated sulfur from IscS, which is then transferred to TusD, and thus determines the direction of sulfur flow from IscS to 2-thiouridine formation. Also appears to be involved in sulfur transfer for the biosynthesis of molybdopterin. This is Sulfur carrier protein TusA from Cronobacter sakazakii (strain ATCC BAA-894) (Enterobacter sakazakii).